The primary structure comprises 314 residues: Putative integrase/recombinase y4rB (314 aa).

In terms of domain architecture, Core-binding (CB) spans 2-79; that stretch reads STFRQAVQEY…YVRVFARYRA (78 aa). The Tyr recombinase domain maps to 100-304; sequence ARPYLYSKED…SPELMKEAMR (205 aa). Residues arginine 147, lysine 172, histidine 248, arginine 251, and histidine 282 contribute to the active site. Residue tyrosine 291 is the O-(3'-phospho-DNA)-tyrosine intermediate of the active site.

It belongs to the 'phage' integrase family.

In Sinorhizobium fredii (strain NBRC 101917 / NGR234), this protein is Putative integrase/recombinase y4rB.